The primary structure comprises 200 residues: 3-isopropylmalate dehydratase small subunit (200 aa).

It belongs to the LeuD family. LeuD type 1 subfamily. In terms of assembly, heterodimer of LeuC and LeuD.

The catalysed reaction is (2R,3S)-3-isopropylmalate = (2S)-2-isopropylmalate. The protein operates within amino-acid biosynthesis; L-leucine biosynthesis; L-leucine from 3-methyl-2-oxobutanoate: step 2/4. Its function is as follows. Catalyzes the isomerization between 2-isopropylmalate and 3-isopropylmalate, via the formation of 2-isopropylmaleate. This chain is 3-isopropylmalate dehydratase small subunit, found in Vibrio campbellii (strain ATCC BAA-1116).